The primary structure comprises 262 residues: UPF0758 protein BTH_I0781 (262 aa).

The tract at residues 1–45 (MQYEIVSAGENVGDEPERERPVAQAAAAPGIPRPAALPAAGAARR) is disordered. The span at 22–43 (VAQAAAAPGIPRPAALPAAGAA) shows a compositional bias: low complexity. The MPN domain maps to 140-262 (LVDSPGAVDD…TFSFAQAGWI (123 aa)). Positions 211, 213, and 224 each coordinate Zn(2+). The JAMM motif motif lies at 211–224 (HNHPSGAVRPSAAD).

The protein belongs to the UPF0758 family.

This Burkholderia thailandensis (strain ATCC 700388 / DSM 13276 / CCUG 48851 / CIP 106301 / E264) protein is UPF0758 protein BTH_I0781.